A 127-amino-acid polypeptide reads, in one-letter code: Small ribosomal subunit protein uS12m (127 aa).

The protein belongs to the universal ribosomal protein uS12 family.

Its subcellular location is the mitochondrion. The protein is Small ribosomal subunit protein uS12m (RPS12) of Acanthamoeba castellanii (Amoeba).